Here is a 283-residue protein sequence, read N- to C-terminus: Pseudokinase OPG198 (283 aa).

ATP contacts are provided by M1 and K30. Residues 1–283 form the Protein kinase domain; the sequence is MESFKYCFDN…DRLRRLFIQD (283 aa).

Belongs to the protein kinase superfamily. Ser/Thr protein kinase family. Poxviruses subfamily. In terms of assembly, interacts with B1/VPK1. Interacts with host VRK1. Interacts with host VRK2.

The protein resides in the host nucleus. With respect to regulation, both catalytically active kinases B1/VPK1 and host VRK2 repress B12 inhibitory activity in a B1/VPK1 deletion mutant strain. In terms of biological role, pseudokinase that plays a role in viral DNA replication repression by activating the antiviral protein BANF1 and inhibiting the activity of host VRK1, a cellular modulator of BANF1. The sequence is that of Pseudokinase OPG198 (OPG198) from Homo sapiens (Human).